The primary structure comprises 153 residues: MKNNNEIVEIYTDGACSGNPGPGGWAAVLIYKGIKKEISGFEENTTNNRMELKAAIEGLKALKRPCKVNLYSDSSYLINAFNEGWIEKWQKNNWLKSDKTPVENQDLWKELLEVSKPHQINWIKVKGHSDNEYNNLCDRLATEQIKKHIKENP.

The RNase H type-1 domain occupies 4–146 (NNEIVEIYTD…CDRLATEQIK (143 aa)). Residues aspartate 13, glutamate 51, aspartate 73, and aspartate 138 each coordinate Mg(2+).

This sequence belongs to the RNase H family. Monomer. Requires Mg(2+) as cofactor.

The protein localises to the cytoplasm. The catalysed reaction is Endonucleolytic cleavage to 5'-phosphomonoester.. Functionally, endonuclease that specifically degrades the RNA of RNA-DNA hybrids. This is Ribonuclease H from Caldanaerobacter subterraneus subsp. tengcongensis (strain DSM 15242 / JCM 11007 / NBRC 100824 / MB4) (Thermoanaerobacter tengcongensis).